Here is a 423-residue protein sequence, read N- to C-terminus: tRNA(Ile)-lysidine synthase (423 aa).

43–48 (SSGVDS) provides a ligand contact to ATP.

The protein belongs to the tRNA(Ile)-lysidine synthase family.

The protein resides in the cytoplasm. The enzyme catalyses cytidine(34) in tRNA(Ile2) + L-lysine + ATP = lysidine(34) in tRNA(Ile2) + AMP + diphosphate + H(+). Ligates lysine onto the cytidine present at position 34 of the AUA codon-specific tRNA(Ile) that contains the anticodon CAU, in an ATP-dependent manner. Cytidine is converted to lysidine, thus changing the amino acid specificity of the tRNA from methionine to isoleucine. This Helicobacter hepaticus (strain ATCC 51449 / 3B1) protein is tRNA(Ile)-lysidine synthase.